The chain runs to 437 residues: MASSSSFTYYCPPSSSPVWSEPLYSLRPEHVRERLQDDSVETVTSIEQAKVEEKIQEVFSSYKFNHLVPRLILQREKHFHYLKRGLRQLTDAYECLDASRPWLCYWILHSLELLDEPIPQIVATDVCQFLELCQSPDGGFGGGPGQYPHLAPTYAAVNALCIIGTEEAYNVINREKLLQYLYSLKQPDGSFLMHVGGEVDVRSAYCAASVASLTNIITPDLFEGTAEWIARCQNWEGGIGGVPGMEAHGGYTFCGLAALVILKKERSLNLKSLLQWVTSRQMRFEGGFQGRCNKLVDGCYSFWQAGLLPLLHRALHAQGDPALSMSHWMFHQQALQEYILMCCQCPAGGLLDKPGKSRDFYHTCYCLSGLSIAQHFGSGAMLHDMVMGVPENVLQPTHPVYNIGPEKVIQATTHFLQKPVPGFEECEDEVTSDPATD.

PFTB repeat units follow at residues 123–164 (ATDV…CIIG), 174–215 (REKL…SLTN), 222–263 (FEGT…VILK), 270–312 (LKSL…PLLH), and 332–374 (QQAL…SIAQ). Residues 248–251 (HGGY) and 291–294 (RCNK) contribute to the (2E,6E)-farnesyl diphosphate site. Residues aspartate 297 and cysteine 299 each coordinate Zn(2+). 300–303 (YSFW) is a (2E,6E)-farnesyl diphosphate binding site. Histidine 362 contributes to the Zn(2+) binding site. Serine 432 is subject to Phosphoserine. Threonine 436 is subject to Phosphothreonine.

This sequence belongs to the protein prenyltransferase subunit beta family. As to quaternary structure, heterodimer of FNTA and FNTB. Zn(2+) serves as cofactor.

It carries out the reaction L-cysteinyl-[protein] + (2E,6E)-farnesyl diphosphate = S-(2E,6E)-farnesyl-L-cysteinyl-[protein] + diphosphate. Essential subunit of the farnesyltransferase complex. Catalyzes the transfer of a farnesyl moiety from farnesyl diphosphate to a cysteine at the fourth position from the C-terminus of several proteins having the C-terminal sequence Cys-aliphatic-aliphatic-X. The polypeptide is Protein farnesyltransferase subunit beta (Fntb) (Mus musculus (Mouse)).